The sequence spans 391 residues: Small ribosomal subunit protein bS1 (391 aa).

4 S1 motif domains span residues 16 to 90, 108 to 173, 194 to 262, and 279 to 348; these read GDKV…LSRR, NEII…LSRK, GDVI…LSIK, and NDVI…LSIK.

Belongs to the bacterial ribosomal protein bS1 family.

Binds mRNA; thus facilitating recognition of the initiation point. It is needed to translate mRNA with a short Shine-Dalgarno (SD) purine-rich sequence. The chain is Small ribosomal subunit protein bS1 (rpsA) from Staphylococcus aureus (strain MSSA476).